The following is a 1211-amino-acid chain: DNA polymerase beta (1211 aa).

4 consecutive repeat copies span residues 1074 to 1077 (KPAG), 1078 to 1081 (KPAG), 1082 to 1085 (NPAG), and 1086 to 1089 (NPAG). The tract at residues 1074 to 1089 (KPAGKPAGNPAGNPAG) is 4 X 4 AA tandem repeats of [NK]-[P]-A-G.

This sequence belongs to the DNA polymerase type-B family.

The enzyme catalyses DNA(n) + a 2'-deoxyribonucleoside 5'-triphosphate = DNA(n+1) + diphosphate. Functionally, DNA-directed DNA polymerase involved in viral DNA replication. This is DNA polymerase beta (DPOL) from African swine fever virus (strain Badajoz 1971 Vero-adapted) (Ba71V).